Reading from the N-terminus, the 735-residue chain is Ribosomal RNA large subunit methyltransferase K/L (735 aa).

Residues 45 to 156 (DGYRACLWSR…RDSLSFSLDL (112 aa)) enclose the THUMP domain.

It belongs to the methyltransferase superfamily. RlmKL family.

It is found in the cytoplasm. It catalyses the reaction guanosine(2445) in 23S rRNA + S-adenosyl-L-methionine = N(2)-methylguanosine(2445) in 23S rRNA + S-adenosyl-L-homocysteine + H(+). It carries out the reaction guanosine(2069) in 23S rRNA + S-adenosyl-L-methionine = N(2)-methylguanosine(2069) in 23S rRNA + S-adenosyl-L-homocysteine + H(+). Functionally, specifically methylates the guanine in position 2445 (m2G2445) and the guanine in position 2069 (m7G2069) of 23S rRNA. This chain is Ribosomal RNA large subunit methyltransferase K/L, found in Allochromatium vinosum (strain ATCC 17899 / DSM 180 / NBRC 103801 / NCIMB 10441 / D) (Chromatium vinosum).